The primary structure comprises 181 residues: Ribosome-recycling factor (181 aa).

Belongs to the RRF family.

It localises to the cytoplasm. Responsible for the release of ribosomes from messenger RNA at the termination of protein biosynthesis. May increase the efficiency of translation by recycling ribosomes from one round of translation to another. This chain is Ribosome-recycling factor, found in Tropheryma whipplei (strain TW08/27) (Whipple's bacillus).